Reading from the N-terminus, the 209-residue chain is Ribosomal RNA large subunit methyltransferase E (209 aa).

5 residues coordinate S-adenosyl-L-methionine: Gly-63, Trp-65, Asp-83, Asp-99, and Asp-124. Residue Lys-164 is the Proton acceptor of the active site.

This sequence belongs to the class I-like SAM-binding methyltransferase superfamily. RNA methyltransferase RlmE family.

It is found in the cytoplasm. It catalyses the reaction uridine(2552) in 23S rRNA + S-adenosyl-L-methionine = 2'-O-methyluridine(2552) in 23S rRNA + S-adenosyl-L-homocysteine + H(+). In terms of biological role, specifically methylates the uridine in position 2552 of 23S rRNA at the 2'-O position of the ribose in the fully assembled 50S ribosomal subunit. The chain is Ribosomal RNA large subunit methyltransferase E from Colwellia psychrerythraea (strain 34H / ATCC BAA-681) (Vibrio psychroerythus).